A 70-amino-acid chain; its full sequence is Large ribosomal subunit protein eL38 (70 aa).

This sequence belongs to the eukaryotic ribosomal protein eL38 family.

The sequence is that of Large ribosomal subunit protein eL38 (RpL38) from Timarcha balearica.